Consider the following 248-residue polypeptide: 23S rRNA (guanosine-2'-O-)-methyltransferase RlmB (248 aa).

G200, I220, and L229 together coordinate S-adenosyl-L-methionine.

The protein belongs to the class IV-like SAM-binding methyltransferase superfamily. RNA methyltransferase TrmH family. RlmB subfamily.

It localises to the cytoplasm. It carries out the reaction guanosine(2251) in 23S rRNA + S-adenosyl-L-methionine = 2'-O-methylguanosine(2251) in 23S rRNA + S-adenosyl-L-homocysteine + H(+). In terms of biological role, specifically methylates the ribose of guanosine 2251 in 23S rRNA. The polypeptide is 23S rRNA (guanosine-2'-O-)-methyltransferase RlmB (Acinetobacter baylyi (strain ATCC 33305 / BD413 / ADP1)).